The chain runs to 954 residues: Kinesin-like protein KIN-7A (954 aa).

The interval 1–29 (MGVSRPPSTPASKIERTPMSTPTPGGSTR) is disordered. The segment covering 17–28 (TPMSTPTPGGST) has biased composition (low complexity). The region spanning 34-354 (KIFVTVRVRP…LFFATCAKEV (321 aa)) is the Kinesin motor domain. Residue 119 to 126 (GQTSSGKT) coordinates ATP. 2 coiled-coil regions span residues 363–436 (VVSD…GDNQ) and 480–588 (LKHE…LVMS). Disordered stretches follow at residues 624 to 689 (PNLI…SSVN) and 741 to 762 (GKTN…DGPD). Positions 630–639 (PCSPLSSSRP) are enriched in low complexity. Composition is skewed to basic and acidic residues over residues 640-660 (LEPE…EGSE) and 666-681 (KSED…ETPR).

The protein belongs to the TRAFAC class myosin-kinesin ATPase superfamily. Kinesin family. KIN-7 subfamily. Ubiquitous with a preferential expression in the shoot apical meristem (SAM).

In terms of biological role, may be essential to promote the progression of cytokinesis during node-internode differentiation. This Oryza sativa subsp. japonica (Rice) protein is Kinesin-like protein KIN-7A.